The following is a 247-amino-acid chain: Cell division protein ZapD (247 aa).

It belongs to the ZapD family. As to quaternary structure, interacts with FtsZ.

The protein resides in the cytoplasm. Cell division factor that enhances FtsZ-ring assembly. Directly interacts with FtsZ and promotes bundling of FtsZ protofilaments, with a reduction in FtsZ GTPase activity. The polypeptide is Cell division protein ZapD (Escherichia fergusonii (strain ATCC 35469 / DSM 13698 / CCUG 18766 / IAM 14443 / JCM 21226 / LMG 7866 / NBRC 102419 / NCTC 12128 / CDC 0568-73)).